The primary structure comprises 440 residues: GTPase Der (440 aa).

EngA-type G domains follow at residues 4 to 168 and 177 to 352; these read PIVA…NPED and IKVA…NQNA. GTP contacts are provided by residues 10-17, 57-61, 120-123, 183-190, 230-234, and 295-298; these read GRPNVGKS, DTGGI, NKVD, GKPNVGKS, DTAGI, and NKWD. One can recognise a KH-like domain in the interval 353–437; that stretch reads MRIPTGALNE…PIRFILREKT (85 aa).

Belongs to the TRAFAC class TrmE-Era-EngA-EngB-Septin-like GTPase superfamily. EngA (Der) GTPase family. As to quaternary structure, associates with the 50S ribosomal subunit.

Functionally, GTPase that plays an essential role in the late steps of ribosome biogenesis. The chain is GTPase Der from Alkaliphilus oremlandii (strain OhILAs) (Clostridium oremlandii (strain OhILAs)).